We begin with the raw amino-acid sequence, 452 residues long: Pre-mRNA-splicing factor prp46 (452 aa).

Low complexity predominate over residues 61 to 70; that stretch reads AAKQAQAAAA. Residues 61-129 are disordered; it reads AAKQAQAAAA…SATRQQPPEW (69 aa). The segment covering 114-125 has biased composition (polar residues); it reads SLIQRPSATRQQ. WD repeat units lie at residues 141–180, 183–222, 225–264, 267–308, 310–349, 350–388, and 399–438; these read GHLG…LRLT, GHIS…VIRH, GHLS…NIHV, GHTG…GVLT, HKKG…QNFE, GHNA…RYQT, and EAEA…TPET. Positions 432 to 452 are disordered; the sequence is DQATPETHPVTWAPTLGRQRY.

It belongs to the WD repeat PRL1/PRL2 family. Associated with the spliceosome.

The protein localises to the cytoplasm. It is found in the nucleus. Functionally, involved in pre-mRNA splicing and required for cell cycle progression at G2/M. This Emericella nidulans (strain FGSC A4 / ATCC 38163 / CBS 112.46 / NRRL 194 / M139) (Aspergillus nidulans) protein is Pre-mRNA-splicing factor prp46 (prp46).